The following is a 159-amino-acid chain: MNVVQGNIEAKNAKVAIVVSRFNSFLVESLLDGAIDTLKRFGQVADENITVVRVPGAVELPLAARRVAASGKFDGIIALGAVIRGGTPHFDFVAGECNKGLAQVALEFDLPVSFGVLTTDTIEQAIERSGTKAGNKGGEAALGLLEMVNVLQQLEQQLS.

5-amino-6-(D-ribitylamino)uracil-binding positions include Phe22, 57-59 (AVE), and 81-83 (AVI). 86 to 87 (GT) serves as a coordination point for (2S)-2-hydroxy-3-oxobutyl phosphate. Catalysis depends on His89, which acts as the Proton donor. Phe114 contributes to the 5-amino-6-(D-ribitylamino)uracil binding site. (2S)-2-hydroxy-3-oxobutyl phosphate is bound at residue Arg128.

The protein belongs to the DMRL synthase family. In terms of assembly, forms an icosahedral capsid composed of 60 subunits, arranged as a dodecamer of pentamers.

The enzyme catalyses (2S)-2-hydroxy-3-oxobutyl phosphate + 5-amino-6-(D-ribitylamino)uracil = 6,7-dimethyl-8-(1-D-ribityl)lumazine + phosphate + 2 H2O + H(+). It participates in cofactor biosynthesis; riboflavin biosynthesis; riboflavin from 2-hydroxy-3-oxobutyl phosphate and 5-amino-6-(D-ribitylamino)uracil: step 1/2. Catalyzes the formation of 6,7-dimethyl-8-ribityllumazine by condensation of 5-amino-6-(D-ribitylamino)uracil with 3,4-dihydroxy-2-butanone 4-phosphate. This is the penultimate step in the biosynthesis of riboflavin. This chain is 6,7-dimethyl-8-ribityllumazine synthase, found in Shewanella denitrificans (strain OS217 / ATCC BAA-1090 / DSM 15013).